Here is a 469-residue protein sequence, read N- to C-terminus: 3-isopropylmalate dehydratase large subunit (469 aa).

[4Fe-4S] cluster is bound by residues Cys347, Cys410, and Cys413.

It belongs to the aconitase/IPM isomerase family. LeuC type 1 subfamily. Heterodimer of LeuC and LeuD. The cofactor is [4Fe-4S] cluster.

It carries out the reaction (2R,3S)-3-isopropylmalate = (2S)-2-isopropylmalate. The protein operates within amino-acid biosynthesis; L-leucine biosynthesis; L-leucine from 3-methyl-2-oxobutanoate: step 2/4. Catalyzes the isomerization between 2-isopropylmalate and 3-isopropylmalate, via the formation of 2-isopropylmaleate. In Burkholderia vietnamiensis (strain G4 / LMG 22486) (Burkholderia cepacia (strain R1808)), this protein is 3-isopropylmalate dehydratase large subunit.